The chain runs to 409 residues: Elongation factor Tu (409 aa).

A tr-type G domain is found at lysine 10–glutamate 214. Residues glycine 19–threonine 26 are G1. Glycine 19–threonine 26 serves as a coordination point for GTP. Residue threonine 26 coordinates Mg(2+). A G2 region spans residues glycine 60–asparagine 64. The G3 stretch occupies residues aspartate 81 to glycine 84. Residues aspartate 81–histidine 85 and asparagine 136–aspartate 139 each bind GTP. The segment at asparagine 136–aspartate 139 is G4. The G5 stretch occupies residues serine 174 to leucine 176.

It belongs to the TRAFAC class translation factor GTPase superfamily. Classic translation factor GTPase family. EF-Tu/EF-1A subfamily. As to quaternary structure, monomer.

The protein localises to the cytoplasm. The catalysed reaction is GTP + H2O = GDP + phosphate + H(+). GTP hydrolase that promotes the GTP-dependent binding of aminoacyl-tRNA to the A-site of ribosomes during protein biosynthesis. In Gloeobacter violaceus (strain ATCC 29082 / PCC 7421), this protein is Elongation factor Tu.